The primary structure comprises 115 residues: Ribonuclease P protein component (115 aa).

This sequence belongs to the RnpA family. As to quaternary structure, consists of a catalytic RNA component (M1 or rnpB) and a protein subunit.

The catalysed reaction is Endonucleolytic cleavage of RNA, removing 5'-extranucleotides from tRNA precursor.. Functionally, RNaseP catalyzes the removal of the 5'-leader sequence from pre-tRNA to produce the mature 5'-terminus. It can also cleave other RNA substrates such as 4.5S RNA. The protein component plays an auxiliary but essential role in vivo by binding to the 5'-leader sequence and broadening the substrate specificity of the ribozyme. This chain is Ribonuclease P protein component, found in Natranaerobius thermophilus (strain ATCC BAA-1301 / DSM 18059 / JW/NM-WN-LF).